The sequence spans 658 residues: Protein translocase subunit SecA 3 (658 aa).

ATP contacts are provided by residues Gln111, 129-133 (GEGKT), and Asp536.

This sequence belongs to the SecA family. Monomer and homodimer. Part of the essential Sec protein translocation apparatus which comprises SecA, SecYEG and auxiliary proteins SecDF-YajC and YidC.

The protein resides in the cell inner membrane. The protein localises to the cytoplasm. The enzyme catalyses ATP + H2O + cellular proteinSide 1 = ADP + phosphate + cellular proteinSide 2.. In terms of biological role, part of the Sec protein translocase complex. Interacts with the SecYEG preprotein conducting channel. Has a central role in coupling the hydrolysis of ATP to the transfer of proteins into and across the cell membrane, serving both as a receptor for the preprotein-SecB complex and as an ATP-driven molecular motor driving the stepwise translocation of polypeptide chains across the membrane. The chain is Protein translocase subunit SecA 3 from Magnetococcus marinus (strain ATCC BAA-1437 / JCM 17883 / MC-1).